A 66-amino-acid chain; its full sequence is Large ribosomal subunit protein uL29 (66 aa).

It belongs to the universal ribosomal protein uL29 family.

This is Large ribosomal subunit protein uL29 from Mesorhizobium japonicum (strain LMG 29417 / CECT 9101 / MAFF 303099) (Mesorhizobium loti (strain MAFF 303099)).